Consider the following 517-residue polypeptide: Pseudaminic acid cytidylyltransferase and UDP-2,4-diacetamido-2,4,6-trideoxy-beta-L-altropyranose hydrolase (517 aa).

The interval 1 to 208 (MRAIAIVLAR…ELSPLEVQDI (208 aa)) is pseudaminic acid cytidylyltransferase. The segment at 209–517 (AHFRRFRISQ…EGALREFLEI (309 aa)) is UDP-2,4-diacetamido-2,4,6-trideoxy-beta-L-altropyranose hydrolase. The active-site Proton acceptor; for UDP-2,4-diacetamido-2,4,6-trideoxy-beta-L-altropyranose hydrolase activity is histidine 244.

This sequence in the N-terminal section; belongs to the CMP-NeuNAc synthase family. The protein in the C-terminal section; belongs to the PseG family. As to quaternary structure, monomer. Mg(2+) serves as cofactor.

The catalysed reaction is UDP-2,4-diacetamido-2,4,6-trideoxy-beta-L-altrose + H2O = 2,4-diacetamido-2,4,6-trideoxy-beta-L-altrose + UDP + H(+). The enzyme catalyses pseudaminate + CTP = CMP-pseudaminate + diphosphate. Functionally, catalyzes the fourth and sixth steps in the biosynthesis of pseudaminic acid, a sialic-acid-like sugar that is used to modify flagellin. The C-terminus mediates the fourth step of the pathway and catalyzes the removal of UDP from C-1 of UDP-2,4-diacetamido-2,4,6-trideoxy-beta-L-altropyranose forming 2,4-diacetamido-2,4,6-trideoxy-beta-L-altropyranose. The N-terminal part mediates the last step of the pathway by mediating activation of pseudaminic acid with CMP by forming CMP-pseudaminic acid. This chain is Pseudaminic acid cytidylyltransferase and UDP-2,4-diacetamido-2,4,6-trideoxy-beta-L-altropyranose hydrolase, found in Helicobacter pylori (strain ATCC 700392 / 26695) (Campylobacter pylori).